The chain runs to 57 residues: Large ribosomal subunit protein bL32 (57 aa).

This sequence belongs to the bacterial ribosomal protein bL32 family.

This chain is Large ribosomal subunit protein bL32, found in Bacillus pumilus (strain SAFR-032).